We begin with the raw amino-acid sequence, 271 residues long: Acetylglutamate kinase (271 aa).

Residues 41-42, R63, and N166 each bind substrate; that span reads GG.

It belongs to the acetylglutamate kinase family. ArgB subfamily.

The protein localises to the cytoplasm. The enzyme catalyses N-acetyl-L-glutamate + ATP = N-acetyl-L-glutamyl 5-phosphate + ADP. The protein operates within amino-acid biosynthesis; L-arginine biosynthesis; N(2)-acetyl-L-ornithine from L-glutamate: step 2/4. Functionally, catalyzes the ATP-dependent phosphorylation of N-acetyl-L-glutamate. The chain is Acetylglutamate kinase from Anaeromyxobacter sp. (strain Fw109-5).